The following is a 202-amino-acid chain: Pyrrolidone-carboxylate peptidase (202 aa).

Active-site residues include Glu-78, Cys-141, and His-165.

Belongs to the peptidase C15 family. As to quaternary structure, homotetramer.

The protein localises to the cytoplasm. The enzyme catalyses Release of an N-terminal pyroglutamyl group from a polypeptide, the second amino acid generally not being Pro.. In terms of biological role, removes 5-oxoproline from various penultimate amino acid residues except L-proline. The sequence is that of Pyrrolidone-carboxylate peptidase from Thermosipho melanesiensis (strain DSM 12029 / CIP 104789 / BI429).